The sequence spans 507 residues: uncharacterized protein (507 aa).

The next 12 helical transmembrane spans lie at 11–31 (ILCF…IFPI), 97–117 (AWIA…YGHL), 125–145 (PVSF…GFAP), 149–169 (VFAV…IVFY), 187–207 (FFNW…CGYW), 209–229 (SAAI…LWLP), 283–303 (LFSS…WFST), 326–346 (FVQA…DLFI), 354–374 (LHQV…ALMI), 388–408 (LAII…WDAC), 423–443 (IGIG…PQMA), and 452–472 (IPYI…CFFL).

This sequence belongs to the major facilitator superfamily.

It is found in the membrane. This is an uncharacterized protein from Caenorhabditis elegans.